Consider the following 188-residue polypeptide: Elongation factor P 1 (188 aa).

Belongs to the elongation factor P family.

It is found in the cytoplasm. It participates in protein biosynthesis; polypeptide chain elongation. Involved in peptide bond synthesis. Stimulates efficient translation and peptide-bond synthesis on native or reconstituted 70S ribosomes in vitro. Probably functions indirectly by altering the affinity of the ribosome for aminoacyl-tRNA, thus increasing their reactivity as acceptors for peptidyl transferase. The protein is Elongation factor P 1 (efp1) of Porphyromonas gingivalis (strain ATCC BAA-308 / W83).